The chain runs to 330 residues: Serine/threonine-protein phosphatase PP1-alpha catalytic subunit (330 aa).

Residue Ser-2 is modified to N-acetylserine. Phosphoserine occurs at positions 2 and 22. The Mn(2+) site is built by Asp-64, His-66, Asp-92, and Asn-124. The active-site Proton donor is the His-125. His-173 and His-248 together coordinate Mn(2+). Lys-305 is modified (N6-acetyllysine). At Tyr-306 the chain carries Phosphotyrosine. The segment at 306–330 (YGQFSGLNPGGRPITPPRNSAKAKK) is disordered. Phosphothreonine is present on Thr-320. Ser-325 is modified (phosphoserine).

This sequence belongs to the PPP phosphatase family. PP-1 subfamily. As to quaternary structure, PP1 comprises a catalytic subunit, PPP1CA, PPP1CB or PPP1CC, which is folded into its native form by inhibitor 2 and glycogen synthetase kinase 3, and then complexed to one or several targeting or regulatory subunits. PPP1R12A, PPP1R12B and PPP1R12C mediate binding to myosin. PPP1R3A (in skeletal muscle), PPP1R3B (in liver), PPP1R3C, PPP1R3D and PPP1R3F (in brain) mediate binding to glycogen. Interacts with PPP1R39. Interacts with BTBD10. Interacts with KCTD20. Interacts with PPP1R9A and PPP1R9B. Part of a complex containing PPP1R15B, PP1 and NCK1/2. Interacts with PHACTR4; which acts as an activator of PP1 activity. Interacts with PPP1R15A and PPP1R15B; the interactions mediate binding to EIF2S1. Interacts with PPP1R7. Interacts with YLPM1. Forms a complex with ILF2, ILF3, YLPM1, KHDRBS1, RBMX and NCOA5. Interacts with NOM1 and PPP1R8. Interacts with PPP1R16B. Interacts with RPSA only in the presence of PPP1R16B. Component of the PNUTS-PP1 phosphatase complex, composed of PPP1R10/PNUTS, TOX4, WDR82, and PPP1CA or PPP1CB or PPP1CC. Interacts with PPP1R10/PNUTS and PPP1R8. Interacts with WDR82 in the presence of PPP1R10/PNUTS. Interacts with TRIM28; the interaction dephosphorylates TRIM28 on 'Ser-824' and forms a complex at the p21 promoter site. Interacts with isoform 1 and isoform 4 of NEK2. Interacts with FER; this promotes phosphorylation at Thr-320. Interacts with DAB2; the interaction is mutually exclusive with the AXIN1:PPP1CA interaction. Interacts with FOXP3. Interacts with CENPA. Interacts with ATG16L1. Found in a complex with PPP1CA, PPP1CC, SHC1 and PEAK1. Interacts with tensin TNS1. Interacts with SAXO4, PPP1R21, PPP1R26, PPP1R27, PPP1R35, PPP1R36, PPP1R37, SH3RF2, ELFN1 and ELFN2. Interacts with TPRN; the interaction results in inhibition of PPC1A phosphatase activity. Interacts with SKA1 (via C-terminus); the interaction is direct and required for the recruitment of PP1 to the kinetochore. Interacts with the KNL1 complex subunit KNL1; the interaction is direct and mutually exclusive with KNL1 binding to microtubules. Component of the SHOC2-MRAS-PP1c (SMP) complex consisting of SHOC2, GTP-bound M-Ras/MRAS and the catalytic subunit of protein phosphatase 1 (either PPP1CA, PPP1CB or PPP1CC). SHOC2 and PP1c preferably bind M-Ras/MRAS, but they also bind K-Ras/KRAS, N-Ras/NRAS and H-Ras/HRAS; these interactions are GTP-dependent and both SHOC2 and PP1c are required to form a stable complex. Interacts with SHOC2 in the absence of Ras GTPases. (Microbial infection) Interacts with HHV-1 ICP34.5. In terms of assembly, (Microbial infection) Interacts with Venezuelan equine encephalitis virus (VEEV) capsid protein; this interaction dephosphorylates the capsid protein, which increases its ability to bind to the viral genome. Fe cation serves as cofactor. The cofactor is Mn(2+). Post-translationally, phosphorylated. Dephosphorylated at Thr-320 in the presence of ionizing radiation.

The protein resides in the cytoplasm. It is found in the nucleus. Its subcellular location is the nucleoplasm. It localises to the nucleolus. The enzyme catalyses O-phospho-L-seryl-[protein] + H2O = L-seryl-[protein] + phosphate. The catalysed reaction is O-phospho-L-threonyl-[protein] + H2O = L-threonyl-[protein] + phosphate. Its activity is regulated as follows. The phosphatase activity of the PPP1R15A-PP1 complex toward EIF2S1 is specifically inhibited by Salubrinal, a drug that protects cells from endoplasmic reticulum stress. Its function is as follows. Protein phosphatase that associates with over 200 regulatory proteins to form highly specific holoenzymes which dephosphorylate hundreds of biological targets. Protein phosphatase 1 (PP1) is essential for cell division, transcription elongation, and participates in the regulation of glycogen metabolism, muscle contractility and protein synthesis. Involved in regulation of ionic conductances and long-term synaptic plasticity. May play an important role in dephosphorylating substrates such as the postsynaptic density-associated Ca(2+)/calmodulin dependent protein kinase II. Catalytic component of the PNUTS-PP1 protein phosphatase complex, a protein phosphatase 1 (PP1) complex that promotes RNA polymerase II transcription pause-release, allowing transcription elongation: the PNUTS-PP1 complex mediates the release of RNA polymerase II from promoter-proximal region of genes by catalyzing dephosphorylation of proteins involved in transcription, such as AFF4, CDK9, MEPCE, INTS12, NCBP1, POLR2M/GDOWN1 and SUPT6H. The PNUTS-PP1 complex also regulates transcription termination by mediating dephosphorylation of SUPT5H in termination zones downstream of poly(A) sites, thereby promoting deceleration of RNA polymerase II transcription. PNUTS-PP1 complex is also involved in the response to replication stress by mediating dephosphorylation of POLR2A at 'Ser-5' of the CTD, promoting RNA polymerase II degradation. PNUTS-PP1 also plays a role in the control of chromatin structure and cell cycle progression during the transition from mitosis into interphase. Regulates NEK2 function in terms of kinase activity and centrosome number and splitting, both in the presence and absence of radiation-induced DNA damage. Regulator of neural tube and optic fissure closure, and enteric neural crest cell (ENCCs) migration during development. In balance with CSNK1D and CSNK1E, determines the circadian period length, through the regulation of the speed and rhythmicity of PER1 and PER2 phosphorylation. May dephosphorylate CSNK1D and CSNK1E. Dephosphorylates the 'Ser-418' residue of FOXP3 in regulatory T-cells (Treg) from patients with rheumatoid arthritis, thereby inactivating FOXP3 and rendering Treg cells functionally defective. Dephosphorylates CENPA. Dephosphorylates the 'Ser-139' residue of ATG16L1 causing dissociation of ATG12-ATG5-ATG16L1 complex, thereby inhibiting autophagy. Together with PPP1CC (PP1-gamma subunit), dephosphorylates IFIH1/MDA5 and RIG-I leading to their activation and a functional innate immune response. Core component of the SHOC2-MRAS-PP1c (SMP) holophosphatase complex that regulates the MAPK pathway activation. The SMP complex specifically dephosphorylates the inhibitory phosphorylation at 'Ser-259' of RAF1 kinase, 'Ser-365' of BRAF kinase and 'Ser-214' of ARAF kinase, stimulating their kinase activities. The SMP complex enhances the dephosphorylation activity and substrate specificity of PP1c. Functionally, (Microbial infection) Necessary for alphaviruses replication. This is Serine/threonine-protein phosphatase PP1-alpha catalytic subunit (PPP1CA) from Homo sapiens (Human).